The following is a 140-amino-acid chain: Nucleoside diphosphate kinase (140 aa).

Residues Lys11, Phe59, Arg87, Thr93, Arg104, and Asn114 each coordinate ATP. The Pros-phosphohistidine intermediate role is filled by His117.

Belongs to the NDK family. In terms of assembly, homotetramer. The cofactor is Mg(2+).

Its subcellular location is the cytoplasm. The catalysed reaction is a 2'-deoxyribonucleoside 5'-diphosphate + ATP = a 2'-deoxyribonucleoside 5'-triphosphate + ADP. It carries out the reaction a ribonucleoside 5'-diphosphate + ATP = a ribonucleoside 5'-triphosphate + ADP. In terms of biological role, major role in the synthesis of nucleoside triphosphates other than ATP. The ATP gamma phosphate is transferred to the NDP beta phosphate via a ping-pong mechanism, using a phosphorylated active-site intermediate. This Xanthobacter autotrophicus (strain ATCC BAA-1158 / Py2) protein is Nucleoside diphosphate kinase.